The chain runs to 340 residues: MNWYPWLNAPYRQLVGQHSTGRGHHALLLHSLPGNGEDALIYALSRWLMCQQRQGEKSCGECHSCRLMLAGNHPDWYVLTPEKGKSSIGVELVRQLIDKLYSHAQQGGAKVVWLPHAEVLTDAAANALLKTLEEPPEKTYFLLDCHQPASLLATLRSRCFYWYLACPDTAICLQWLNLQWRKRQIPVEPVAMLAALKLSEGAPLAAERLLQPERWSIRSALCSGLREALNRSDLLSLLPQLNHDDAAERLQWLSSLLLDALKWQQGAGEFAVNQDQLPLVQQLAHIAATPVLLQLAKQLAHCRHQLLSVVGVNRELLLTEQLLSWETALSTGTYSTLPSL.

As to quaternary structure, the DNA polymerase holoenzyme is a complex that contains 10 different types of subunits. These subunits are organized into 3 functionally essential subassemblies: the pol III core, the beta sliding clamp processivity factor and the clamp-loading complex. The pol III core (subunits alpha,epsilon and theta) contains the polymerase and the 3'-5' exonuclease proofreading activities. The polymerase is tethered to the template via the sliding clamp processivity factor. The clamp-loading complex assembles the beta processivity factor onto the primer template and plays a central role in the organization and communication at the replication fork. This complex contains delta, delta', psi and chi, and copies of either or both of two different DnaX proteins, gamma and tau. The composition of the holoenzyme is, therefore: (alpha,epsilon,theta)[2]-(gamma/tau)[3]-delta,delta', psi,chi-beta[4].

It carries out the reaction DNA(n) + a 2'-deoxyribonucleoside 5'-triphosphate = DNA(n+1) + diphosphate. Its function is as follows. DNA polymerase III is a complex, multichain enzyme responsible for most of the replicative synthesis in bacteria. This DNA polymerase also exhibits 3' to 5' exonuclease activity. This is DNA polymerase III subunit delta' (holB) from Yersinia pestis.